The sequence spans 553 residues: Protein spartin (553 aa).

Positions 15 to 96 (IRTAYKAAMT…ETELRYRLKV (82 aa)) constitute an MIT domain. The tract at residues 105 to 130 (DDSAVEATEESRAEMDTKRPPLLAEN) is disordered. The span at 113 to 123 (EESRAEMDTKR) shows a compositional bias: basic and acidic residues. The Senescence domain maps to 325–509 (IVSAADFIAS…SQNVNYITPK (185 aa)).

In terms of assembly, interacts with Eps-15 (via C-terminal region); the interaction is required for spartin localization to the NMJ presynaptic membrane. As to expression, expressed in larval brain, ventral nerve cord and neuropil (at protein level).

It is found in the presynaptic cell membrane. It localises to the early endosome. The protein resides in the lipid droplet. Functionally, during postembryonic development, functions with endocytic adapter Eps-15 in neurons to restrain synaptic growth, by inhibiting BMP signaling, and to control synaptic endocytosis. Required presynaptically for neuromuscular junction (NMJ) neurotransmission. Inhibits neuronal BMP signaling by promoting endocytic internalization and subsequent endosomal trafficking of the BMP receptor wit. In this way, regulates the Fmr1 translational regulator controlling Futsch expression to modulate neuronal microtubule stability, which controls both synaptogenesis and neuronal survival. The protein is Protein spartin of Drosophila melanogaster (Fruit fly).